Here is a 253-residue protein sequence, read N- to C-terminus: Tetraspanin-3 (253 aa).

The Cytoplasmic segment spans residues 1–11; the sequence is MGQCGITSSKT. The chain crosses the membrane as a helical span at residues 12-32; the sequence is VLVFLNLIFWGAAGILCYVGA. The Extracellular portion of the chain corresponds to 33 to 50; the sequence is YVFITYDDYDHFFEDVYT. The chain crosses the membrane as a helical span at residues 51-71; the sequence is LIPAVVIIAVGALLFIIGLIG. Residues 72-85 are Cytoplasmic-facing; that stretch reads CCATIRESRCGLAT. Residues 86-106 form a helical membrane-spanning segment; that stretch reads FVIILLLVFVTEVVVVVLGYV. Over 107–212 the chain is Extracellular; that stretch reads YRAKVENEVD…KKLQEIMMHV (106 aa). N-linked (GlcNAc...) asparagine glycosylation is found at N127, N152, N167, and N183. Residues 213-233 form a helical membrane-spanning segment; that stretch reads IWAALAFAAIQLLGMLCACIV. Residues 234–253 are Cytoplasmic-facing; it reads LCRRSRDPAYELLITGGAYA.

Belongs to the tetraspanin (TM4SF) family. Interacts with claudin-11/CLDN11 and integrins.

The protein localises to the membrane. Functionally, regulates the proliferation and migration of oligodendrocytes, a process essential for normal myelination and repair. The protein is Tetraspanin-3 (TSPAN3) of Bos taurus (Bovine).